A 304-amino-acid polypeptide reads, in one-letter code: Thymidylate synthase (304 aa).

Residues Arg-30 and 157–158 each bind dUMP; that span reads RR. Catalysis depends on Cys-177, which acts as the Nucleophile. DUMP-binding positions include 206–209, Asn-217, and 247–249; these read RSCD and HVY. Residue Asp-209 coordinates (6R)-5,10-methylene-5,6,7,8-tetrahydrofolate.

Belongs to the thymidylate synthase family. As to quaternary structure, homodimer.

Its subcellular location is the nucleus. It carries out the reaction dUMP + (6R)-5,10-methylene-5,6,7,8-tetrahydrofolate = 7,8-dihydrofolate + dTMP. It participates in pyrimidine metabolism; dTTP biosynthesis. With respect to regulation, inhibited by 5-fluoro-2'-deoxyuridine 5'-monophosphate (FdUMP). In terms of biological role, thymidylate synthase required for de novo biosynthesis of pyrimidine deoxyribonucleotides. Required for both nuclear and mitochondrial DNA synthesis. The protein is Thymidylate synthase (CDC21) of Saccharomyces cerevisiae (strain ATCC 204508 / S288c) (Baker's yeast).